The sequence spans 353 residues: UDP-N-acetylglucosamine--N-acetylmuramyl-(pentapeptide) pyrophosphoryl-undecaprenol N-acetylglucosamine transferase (353 aa).

Residues 10 to 12 (TGG), Asn-124, Ser-183, and Gln-283 each bind UDP-N-acetyl-alpha-D-glucosamine.

This sequence belongs to the glycosyltransferase 28 family. MurG subfamily.

The protein resides in the cell inner membrane. The enzyme catalyses di-trans,octa-cis-undecaprenyl diphospho-N-acetyl-alpha-D-muramoyl-L-alanyl-D-glutamyl-meso-2,6-diaminopimeloyl-D-alanyl-D-alanine + UDP-N-acetyl-alpha-D-glucosamine = di-trans,octa-cis-undecaprenyl diphospho-[N-acetyl-alpha-D-glucosaminyl-(1-&gt;4)]-N-acetyl-alpha-D-muramoyl-L-alanyl-D-glutamyl-meso-2,6-diaminopimeloyl-D-alanyl-D-alanine + UDP + H(+). It functions in the pathway cell wall biogenesis; peptidoglycan biosynthesis. Functionally, cell wall formation. Catalyzes the transfer of a GlcNAc subunit on undecaprenyl-pyrophosphoryl-MurNAc-pentapeptide (lipid intermediate I) to form undecaprenyl-pyrophosphoryl-MurNAc-(pentapeptide)GlcNAc (lipid intermediate II). This chain is UDP-N-acetylglucosamine--N-acetylmuramyl-(pentapeptide) pyrophosphoryl-undecaprenol N-acetylglucosamine transferase, found in Helicobacter pylori (strain HPAG1).